Reading from the N-terminus, the 969-residue chain is UvrABC system protein A (969 aa).

32 to 39 (GLSGSGKS) is a binding site for ATP. The C4-type zinc-finger motif lies at 258 to 286 (CPNGHPLAVDDLEPRSFSFNSPYGACPEC). 2 consecutive ABC transporter domains span residues 316-599 (WSAG…KDSI) and 619-948 (VDRK…KFLA). 652–659 (GVSGSGKS) is an ATP binding site. The C4-type zinc-finger motif lies at 751–777 (CEACTGDGTIKIEMNFLPDVYVPCEVC).

It belongs to the ABC transporter superfamily. UvrA family. Forms a heterotetramer with UvrB during the search for lesions.

The protein localises to the cytoplasm. In terms of biological role, the UvrABC repair system catalyzes the recognition and processing of DNA lesions. UvrA is an ATPase and a DNA-binding protein. A damage recognition complex composed of 2 UvrA and 2 UvrB subunits scans DNA for abnormalities. When the presence of a lesion has been verified by UvrB, the UvrA molecules dissociate. This is UvrABC system protein A from Mycobacterium leprae (strain TN).